Here is a 150-residue protein sequence, read N- to C-terminus: MTTFLIKHKASGKFLHPKGGSSNPANDTNLVLHSDIHERMYFQFDVVDERWGYIKHAASGKIVHPLGGKADPPNETKLVLHQDRHDRALFAMDFFNDNIIHKAGKYVHPKGGSTNPPNETLTVMHGDKHGAMEFIFVSPKNKDKRVLVYV.

Positions 16 and 19 each coordinate D-galactose. N-linked (GlcNAc...) asparagine glycosylation occurs at N26. Residues D27, 35–37, H64, and G67 each bind D-galactose; that span reads DIH. N74 is a glycosylation site (N-linked (GlcNAc...) asparagine). Residues E75, 83–85, H108, and G111 each bind D-galactose; that span reads DRH. The N-linked (GlcNAc...) asparagine glycan is linked to N118. Residues E119 and 127–129 each bind D-galactose; that span reads DKH.

As to quaternary structure, homodimer. Likely to form large oligomers; oligomerization enhances hemagglutination activity. Post-translationally, glycosylated.

With respect to regulation, hemagglutination activity is not dependent on divalent cations. Hemagglutination activity is highly inhibited by D-galactose and N-acetyl-D-galactosamine, and to a lesser extent by raffinose. Also inhibited by melibiose and alpha-lactose, but not by beta-lactose or D-glucose. In terms of biological role, D-galactose-binding lectin. Also binds N-acetyl-D-galactosamine. Has hemagglutination activity towards all types of human erythrocytes (O, A and B) and rabbit erythrocytes. Agglutinates Gram-negative and Gram-positive bacteria including E.coli DH5-alpha and L.plantarum ATCC8014, respectively, and has bacteriostatic activity against them. Also agglutinates M.lysodeikticus. May be involved in innate immunity by recognizing and eliminating pathogens. The sequence is that of Galactose-binding lectin from Mytilus californianus (California mussel).